Reading from the N-terminus, the 424-residue chain is Virion nicking-joining enzyme (424 aa).

PLD phosphodiesterase domains follow at residues 110–137 (LGGVLHTKFWISDNTHIYLGSANMDWRS) and 320–346 (YSRVNHAKYMVTDKTAYIGTSNWTGNY).

The protein belongs to the orthopoxvirus OPG042 family.

The protein localises to the virion. DNA nicking enzyme that cleaves extruded cruciform DNA at its tip. Probably nicks viral hairpins. This Vaccinia virus (strain Western Reserve) (VACV) protein is Virion nicking-joining enzyme (OPG042).